We begin with the raw amino-acid sequence, 274 residues long: Putative phosphoenolpyruvate synthase regulatory protein (274 aa).

154–161 lines the ADP pocket; that stretch reads GVSRCGKT.

The protein belongs to the pyruvate, phosphate/water dikinase regulatory protein family. PSRP subfamily.

It carries out the reaction [pyruvate, water dikinase] + ADP = [pyruvate, water dikinase]-phosphate + AMP + H(+). The enzyme catalyses [pyruvate, water dikinase]-phosphate + phosphate + H(+) = [pyruvate, water dikinase] + diphosphate. Functionally, bifunctional serine/threonine kinase and phosphorylase involved in the regulation of the phosphoenolpyruvate synthase (PEPS) by catalyzing its phosphorylation/dephosphorylation. This is Putative phosphoenolpyruvate synthase regulatory protein from Pseudomonas aeruginosa (strain LESB58).